A 200-amino-acid polypeptide reads, in one-letter code: Guanylyl cyclase-activating protein 2 (200 aa).

A lipid anchor (N-myristoyl glycine) is attached at glycine 2. EF-hand domains follow at residues 14 to 31 (GEID…FVME), 53 to 88 (EASQ…VLRG), 89 to 124 (TLEH…IYQL), and 141 to 176 (TPEE…DKWV). Residues aspartate 66, asparagine 68, aspartate 70, threonine 72, glutamate 77, aspartate 102, aspartate 104, asparagine 106, cysteine 108, glutamate 113, aspartate 154, asparagine 156, aspartate 158, glutamine 160, and glutamate 165 each contribute to the Ca(2+) site.

In terms of processing, the N-terminus is blocked. In terms of tissue distribution, in the retina, it is expressed in cone and rod photoreceptor cells.

The protein localises to the cell membrane. It localises to the photoreceptor inner segment. Its subcellular location is the cell projection. It is found in the cilium. The protein resides in the photoreceptor outer segment. Stimulates two retinal guanylyl cyclases (GCs) GUCY2D and GUCY2F when free calcium ions concentration is low, and inhibits GUCY2D and GUCY2F when free calcium ions concentration is elevated. This Ca(2+)-sensitive regulation of GCs is a key event in recovery of the dark state of rod photoreceptors following light exposure. May be involved in cone photoreceptor response and recovery of response in bright light. This Homo sapiens (Human) protein is Guanylyl cyclase-activating protein 2 (GUCA1B).